The sequence spans 254 residues: Alcohol dehydrogenase (254 aa).

10-33 is an NAD(+) binding site; it reads FVAGLGGIGLDTSREIVKSGPKNL. Serine 138 serves as a coordination point for substrate. Catalysis depends on tyrosine 151, which acts as the Proton acceptor.

It belongs to the short-chain dehydrogenases/reductases (SDR) family. As to quaternary structure, homodimer.

It catalyses the reaction a primary alcohol + NAD(+) = an aldehyde + NADH + H(+). It carries out the reaction a secondary alcohol + NAD(+) = a ketone + NADH + H(+). In Drosophila mimica (Fruit fly), this protein is Alcohol dehydrogenase (Adh).